The following is a 178-amino-acid chain: ATP synthase subunit delta (178 aa).

This sequence belongs to the ATPase delta chain family. F-type ATPases have 2 components, F(1) - the catalytic core - and F(0) - the membrane proton channel. F(1) has five subunits: alpha(3), beta(3), gamma(1), delta(1), epsilon(1). F(0) has three main subunits: a(1), b(2) and c(10-14). The alpha and beta chains form an alternating ring which encloses part of the gamma chain. F(1) is attached to F(0) by a central stalk formed by the gamma and epsilon chains, while a peripheral stalk is formed by the delta and b chains.

It localises to the cell membrane. In terms of biological role, f(1)F(0) ATP synthase produces ATP from ADP in the presence of a proton or sodium gradient. F-type ATPases consist of two structural domains, F(1) containing the extramembraneous catalytic core and F(0) containing the membrane proton channel, linked together by a central stalk and a peripheral stalk. During catalysis, ATP synthesis in the catalytic domain of F(1) is coupled via a rotary mechanism of the central stalk subunits to proton translocation. This protein is part of the stalk that links CF(0) to CF(1). It either transmits conformational changes from CF(0) to CF(1) or is implicated in proton conduction. The protein is ATP synthase subunit delta of Geobacillus stearothermophilus (Bacillus stearothermophilus).